We begin with the raw amino-acid sequence, 236 residues long: Orotidine 5'-phosphate decarboxylase (236 aa).

Residues Asp13, Lys35, 62 to 71, Thr123, Arg184, Gln193, Gly213, and Arg214 each bind substrate; that span reads DLKFYDIPQT. Lys64 (proton donor) is an active-site residue.

The protein belongs to the OMP decarboxylase family. Type 1 subfamily. In terms of assembly, homodimer.

It carries out the reaction orotidine 5'-phosphate + H(+) = UMP + CO2. It participates in pyrimidine metabolism; UMP biosynthesis via de novo pathway; UMP from orotate: step 2/2. Functionally, catalyzes the decarboxylation of orotidine 5'-monophosphate (OMP) to uridine 5'-monophosphate (UMP). This is Orotidine 5'-phosphate decarboxylase from Coxiella burnetii (strain CbuK_Q154) (Coxiella burnetii (strain Q154)).